The following is a 347-amino-acid chain: Autoinducer 2 import system permease protein LsrC (347 aa).

The next 9 membrane-spanning stretches (helical) occupy residues leucine 14–valine 34, methionine 39–leucine 59, glycine 72–cysteine 92, leucine 93–leucine 113, isoleucine 115–tryptophan 135, valine 155–tryptophan 175, leucine 213–proline 233, valine 249–alanine 269, and isoleucine 284–aspartate 304.

It belongs to the binding-protein-dependent transport system permease family. AraH/RbsC subfamily. In terms of assembly, the complex is composed of two ATP-binding proteins (LsrA), two transmembrane proteins (LsrC and LsrD) and a solute-binding protein (LsrB).

It is found in the cell inner membrane. In terms of biological role, part of the ABC transporter complex LsrABCD involved in autoinducer 2 (AI-2) import. Probably responsible for the translocation of the substrate across the membrane. In Salmonella paratyphi A (strain ATCC 9150 / SARB42), this protein is Autoinducer 2 import system permease protein LsrC (lsrC).